A 351-amino-acid polypeptide reads, in one-letter code: Uroporphyrinogen decarboxylase (351 aa).

Substrate contacts are provided by residues 26–30 (RQAGR), Asp-75, Tyr-151, Ser-206, and His-321.

It belongs to the uroporphyrinogen decarboxylase family. In terms of assembly, homodimer.

The protein resides in the cytoplasm. The catalysed reaction is uroporphyrinogen III + 4 H(+) = coproporphyrinogen III + 4 CO2. It functions in the pathway porphyrin-containing compound metabolism; protoporphyrin-IX biosynthesis; coproporphyrinogen-III from 5-aminolevulinate: step 4/4. In terms of biological role, catalyzes the decarboxylation of four acetate groups of uroporphyrinogen-III to yield coproporphyrinogen-III. This is Uroporphyrinogen decarboxylase from Koribacter versatilis (strain Ellin345).